A 439-amino-acid chain; its full sequence is Ribosomal protein uS12 methylthiotransferase RimO (439 aa).

In terms of domain architecture, MTTase N-terminal spans 7-122 (QTIAVIALGC…LPDLVFGKNF (116 aa)). [4Fe-4S] cluster contacts are provided by cysteine 16, cysteine 52, cysteine 85, cysteine 155, cysteine 159, and cysteine 162. Residues 141–369 (SSTIPSAYLK…NAQYNIFQAK (229 aa)) enclose the Radical SAM core domain.

It belongs to the methylthiotransferase family. RimO subfamily. It depends on [4Fe-4S] cluster as a cofactor.

It localises to the cytoplasm. It carries out the reaction L-aspartate(89)-[ribosomal protein uS12]-hydrogen + (sulfur carrier)-SH + AH2 + 2 S-adenosyl-L-methionine = 3-methylsulfanyl-L-aspartate(89)-[ribosomal protein uS12]-hydrogen + (sulfur carrier)-H + 5'-deoxyadenosine + L-methionine + A + S-adenosyl-L-homocysteine + 2 H(+). Its function is as follows. Catalyzes the methylthiolation of an aspartic acid residue of ribosomal protein uS12. The protein is Ribosomal protein uS12 methylthiotransferase RimO of Endomicrobium trichonymphae.